We begin with the raw amino-acid sequence, 304 residues long: MTQRLFVTGLSGFVGKHLQAYLAAAHTPWALLPVPHRYDLLEPDSLGDLWPELPDAVIHLAGQTYVPEAFRDPARTLQINLLGTLNLLQALKARGFSGTFLYISSGDVYGQVAEAALPIHEELIPHPRNPYAVSKLAAESLCLQWGITEGWRVLVARPFNHIGPGQKDSFVIASAARQIARMKQGLQANRLEVGDIDVSRDFLDVQDVLSAYLRLLSHGEAGAVYNVCSGQEQKIRELIELLADIAQVELEIVQDPARMRRAEQRRVRGSHARLHDTTGWKPEITIKQSLRAILSDWESRVREE.

NADP(+)-binding positions include 13–14 (FV) and 39–40 (DL). 105–106 (SG) lines the substrate pocket. Y131 lines the NADP(+) pocket. Residues N160, R200, and 260-263 (RRAE) contribute to the substrate site.

The protein belongs to the NAD(P)-dependent epimerase/dehydratase family. GDP-6-deoxy-D-mannose reductase subfamily.

It catalyses the reaction GDP-alpha-D-rhamnose + NAD(+) = GDP-4-dehydro-alpha-D-rhamnose + NADH + H(+). It carries out the reaction GDP-alpha-D-rhamnose + NADP(+) = GDP-4-dehydro-alpha-D-rhamnose + NADPH + H(+). Its function is as follows. Reductase that catalyzes the conversion of GDP-6-deoxy-D-mannose to GDP-4-dehydro-6-deoxy-D-mannose (GDP-D-rhamnose). The protein is GDP-6-deoxy-D-mannose reductase (rmd) of Pseudomonas aeruginosa (strain ATCC 15692 / DSM 22644 / CIP 104116 / JCM 14847 / LMG 12228 / 1C / PRS 101 / PAO1).